The chain runs to 728 residues: Catalase-peroxidase (728 aa).

Residues Trp91–Tyr218 constitute a cross-link (tryptophyl-tyrosyl-methioninium (Trp-Tyr) (with M-244)). His92 acts as the Proton acceptor in catalysis. Positions Tyr218–Met244 form a cross-link, tryptophyl-tyrosyl-methioninium (Tyr-Met) (with W-91). His259 contacts heme b.

Belongs to the peroxidase family. Peroxidase/catalase subfamily. As to quaternary structure, homodimer or homotetramer. Heme b serves as cofactor. Post-translationally, formation of the three residue Trp-Tyr-Met cross-link is important for the catalase, but not the peroxidase activity of the enzyme.

The enzyme catalyses H2O2 + AH2 = A + 2 H2O. It carries out the reaction 2 H2O2 = O2 + 2 H2O. Functionally, bifunctional enzyme with both catalase and broad-spectrum peroxidase activity. In Burkholderia multivorans (strain ATCC 17616 / 249), this protein is Catalase-peroxidase.